The chain runs to 144 residues: Actin-associated protein FAM107A (144 aa).

A coiled-coil region spans residues 70–90 (VLEHRRRNQLIKKKEEELEAK). Residues 74–84 (RRRNQLIKKKE) carry the Nuclear localization signal motif. Residues 104 to 123 (QQRLNQLENPPQRDEDHAPE) are disordered. The segment covering 114 to 123 (PQRDEDHAPE) has biased composition (basic and acidic residues).

As to quaternary structure, interacts with ACTB. Interacts with F-actin. Interacts with PRDX1. Interacts with COMMD1; this interaction stabilizes COMMD1 in the nucleus. Interacts with MAP1A. In terms of tissue distribution, expressed in septum, the neocortex, the CA3 region of the hippocampus and the cerebellum (at protein level).

The protein localises to the nucleus. It localises to the cytoplasm. Its subcellular location is the cytoskeleton. It is found in the stress fiber. The protein resides in the cell junction. The protein localises to the focal adhesion. It localises to the cell projection. Its subcellular location is the ruffle membrane. It is found in the synapse. Its function is as follows. Stress-inducible actin-binding protein that plays a role in synaptic and cognitive functions by modulating actin filamentous (F-actin) dynamics. Mediates polymerization of globular actin to F-actin. Also binds to, stabilizes and bundles F-actin. Involved in synaptic function by regulating neurite outgrowth in an actin-dependent manner and for the acquisition of hippocampus-dependent cognitive function, such as learning and long-term memory. Plays a role in the actin and microtubule cytoskeleton organization; negatively regulates focal adhesion (FA) assembly promoting malignant glial cell migration in an actin-, microtubule- and MAP1A-dependent manner. Also involved in neuroblastoma G1/S phase cell cycle progression and cell proliferation inhibition by stimulating ubiquitination of NF-kappa-B subunit RELA and NF-kappa-B degradation in a COMMD1- and actin-dependent manner. May play a role in tumor development. This chain is Actin-associated protein FAM107A, found in Mus musculus (Mouse).